The primary structure comprises 120 residues: MIDFGNLKYENGLIIGIVQDRASKEVLMCAYMNREALEKTVETGIAHFWSRSRQKLWKKGETSGHLQKVKEIRIDCDMDSVLLLVEQVGGACHMGYRSCFYRNLDGEVVGEKVFEPEDVY.

A Mg(2+)-binding site is contributed by Asp-75. Cys-76 is a Zn(2+) binding site. Mg(2+)-binding residues include Asp-77 and Asp-79. Zn(2+) contacts are provided by Cys-92 and Cys-99.

Belongs to the PRA-CH family. As to quaternary structure, homodimer. Requires Mg(2+) as cofactor. The cofactor is Zn(2+).

Its subcellular location is the cytoplasm. It catalyses the reaction 1-(5-phospho-beta-D-ribosyl)-5'-AMP + H2O = 1-(5-phospho-beta-D-ribosyl)-5-[(5-phospho-beta-D-ribosylamino)methylideneamino]imidazole-4-carboxamide. It functions in the pathway amino-acid biosynthesis; L-histidine biosynthesis; L-histidine from 5-phospho-alpha-D-ribose 1-diphosphate: step 3/9. Functionally, catalyzes the hydrolysis of the adenine ring of phosphoribosyl-AMP. The sequence is that of Phosphoribosyl-AMP cyclohydrolase from Methanosarcina mazei (strain ATCC BAA-159 / DSM 3647 / Goe1 / Go1 / JCM 11833 / OCM 88) (Methanosarcina frisia).